Here is a 151-residue protein sequence, read N- to C-terminus: 3-dehydroquinate dehydratase 1 (151 aa).

Residue Y24 is the Proton acceptor of the active site. N75, H81, and D88 together coordinate substrate. Residue H101 is the Proton donor of the active site. Substrate-binding positions include 102 to 103 (IS) and R112.

Belongs to the type-II 3-dehydroquinase family. Homododecamer.

The catalysed reaction is 3-dehydroquinate = 3-dehydroshikimate + H2O. Its pathway is metabolic intermediate biosynthesis; chorismate biosynthesis; chorismate from D-erythrose 4-phosphate and phosphoenolpyruvate: step 3/7. Functionally, catalyzes a trans-dehydration via an enolate intermediate. This is 3-dehydroquinate dehydratase 1 (aroQ1) from Corynebacterium efficiens (strain DSM 44549 / YS-314 / AJ 12310 / JCM 11189 / NBRC 100395).